The sequence spans 308 residues: Methionyl-tRNA formyltransferase (308 aa).

Position 110–113 (110–113 (SLLP)) interacts with (6S)-5,6,7,8-tetrahydrofolate.

It belongs to the Fmt family.

It carries out the reaction L-methionyl-tRNA(fMet) + (6R)-10-formyltetrahydrofolate = N-formyl-L-methionyl-tRNA(fMet) + (6S)-5,6,7,8-tetrahydrofolate + H(+). In terms of biological role, attaches a formyl group to the free amino group of methionyl-tRNA(fMet). The formyl group appears to play a dual role in the initiator identity of N-formylmethionyl-tRNA by promoting its recognition by IF2 and preventing the misappropriation of this tRNA by the elongation apparatus. This is Methionyl-tRNA formyltransferase from Neisseria meningitidis serogroup C (strain 053442).